The chain runs to 1116 residues: Rho GTPase-activating protein 45 (1116 aa).

The interval 1–72 (MFSRKKRELM…RPTSLSRHAS (72 aa)) is disordered. Polar residues predominate over residues 22–31 (GSPNPQSSSG). Residues serine 23, serine 72, serine 92, and serine 98 each carry the phosphoserine modification. The 271-residue stretch at 268-538 (EEVDMLLQRC…SSKLYDPGQQ (271 aa)) folds into the F-BAR domain. Residues 375-498 (EHERRRKEIK…QIQEVIRQSD (124 aa)) are a coiled coil. The interval 422-457 (VAKAEEEQQGTGPGAGTAASKALDKRRRLEEEAKNK) is disordered. Residues 448–457 (RRLEEEAKNK) show a composition bias toward basic and acidic residues. A phosphoserine mark is found at serine 568, serine 577, serine 591, and serine 618. Positions 569 to 658 (PIMRTRKGSF…MSSSEELGDQ (90 aa)) are disordered. Residues 621–635 (ISISDTEVGLDTSSG) are compositionally biased toward polar residues. Residues 643 to 652 (TSSSGTMSSS) are compositionally biased toward low complexity. A Phorbol-ester/DAG-type zinc finger spans residues 699–744 (THRLRKLRTPAKCRECNSYVYFQGAECEECCLACHKKCLETLAIQC). The region spanning 758-971 (QDFSQAALST…TLIVHYGLVF (214 aa)) is the Rho-GAP domain. Serine 946, serine 1017, serine 1020, and serine 1022 each carry phosphoserine. Disordered stretches follow at residues 1004–1035 (EEAEDGSRESHAASNDSDSELEDASDPLSSSD) and 1050–1116 (AGLE…PQFV). Composition is skewed to polar residues over residues 1080–1090 (FNTNQSNNTSR) and 1105–1116 (GGTSQERQPQFV).

The protein resides in the cytoplasm. The protein localises to the cell projection. It is found in the ruffle membrane. Contains a GTPase activator for the Rho-type GTPases (RhoGAP) domain that would be able to negatively regulate the actin cytoskeleton as well as cell spreading. However, also contains N-terminally a BAR-domin which is able to play an autoinhibitory effect on this RhoGAP activity. The chain is Rho GTPase-activating protein 45 from Mus musculus (Mouse).